We begin with the raw amino-acid sequence, 187 residues long: Elongation factor P (187 aa).

This sequence belongs to the elongation factor P family.

The protein localises to the cytoplasm. It functions in the pathway protein biosynthesis; polypeptide chain elongation. In terms of biological role, involved in peptide bond synthesis. Stimulates efficient translation and peptide-bond synthesis on native or reconstituted 70S ribosomes in vitro. Probably functions indirectly by altering the affinity of the ribosome for aminoacyl-tRNA, thus increasing their reactivity as acceptors for peptidyl transferase. This Gloeobacter violaceus (strain ATCC 29082 / PCC 7421) protein is Elongation factor P.